The primary structure comprises 332 residues: Glycerol-3-phosphate dehydrogenase [NAD(P)+] (332 aa).

W11, R30, and K108 together coordinate NADPH. Sn-glycerol 3-phosphate-binding residues include K108, G137, and S139. A141 is an NADPH binding site. The sn-glycerol 3-phosphate site is built by K192, D245, S255, R256, and N257. Residue K192 is the Proton acceptor of the active site. R256 provides a ligand contact to NADPH. V280 and E282 together coordinate NADPH.

It belongs to the NAD-dependent glycerol-3-phosphate dehydrogenase family.

The protein resides in the cytoplasm. The enzyme catalyses sn-glycerol 3-phosphate + NAD(+) = dihydroxyacetone phosphate + NADH + H(+). It catalyses the reaction sn-glycerol 3-phosphate + NADP(+) = dihydroxyacetone phosphate + NADPH + H(+). It functions in the pathway membrane lipid metabolism; glycerophospholipid metabolism. Functionally, catalyzes the reduction of the glycolytic intermediate dihydroxyacetone phosphate (DHAP) to sn-glycerol 3-phosphate (G3P), the key precursor for phospholipid synthesis. This chain is Glycerol-3-phosphate dehydrogenase [NAD(P)+], found in Burkholderia orbicola (strain MC0-3).